The primary structure comprises 177 residues: O-acetyl-ADP-ribose deacetylase (177 aa).

In terms of domain architecture, Macro spans 1–175; that stretch reads MKTRIHVVQG…LYERLLTQQG (175 aa). Substrate is bound by residues 11–12, asparagine 25, 33–35, and 122–126; these read DI, GVD, and STGVY. The Proton acceptor role is filled by aspartate 35.

It belongs to the MacroD-type family. YmdB subfamily. As to quaternary structure, homodimer. Interacts with RNase III.

It catalyses the reaction 3''-O-acetyl-ADP-D-ribose + H2O = ADP-D-ribose + acetate + H(+). The enzyme catalyses 2''-O-acetyl-ADP-D-ribose + H2O = ADP-D-ribose + acetate + H(+). Functionally, deacetylates O-acetyl-ADP ribose to yield ADP-ribose and free acetate. Down-regulates ribonuclease 3 (RNase III) activity. Acts by interacting directly with the region of the ribonuclease that is required for dimerization/activation. The polypeptide is O-acetyl-ADP-ribose deacetylase (Shigella dysenteriae serotype 1 (strain Sd197)).